The primary structure comprises 83 residues: U3-theraphotoxin-Cg1a (83 aa).

The first 23 residues, 1-23 (MRTFTLIAILTCAVLVIFHAAAA), serve as a signal peptide directing secretion. The propeptide occupies 24–44 (EELEAQDVIETEALATLDEER). 3 disulfide bridges follow: Cys48–Cys61, Cys52–Cys75, and Cys69–Cys80.

The protein belongs to the neurotoxin 12 (Hwtx-2) family. 03 (juruin) subfamily. Contains 3 disulfide bonds. Two different connectivities are observed in similar proteins (C1-C3, C2-C5, C4-C6 or C1-C4, C2-C5, C3-C6). As to expression, expressed by the venom gland.

Its subcellular location is the secreted. In terms of biological role, probable ion channel inhibitor. The chain is U3-theraphotoxin-Cg1a from Chilobrachys guangxiensis (Chinese earth tiger tarantula).